Consider the following 650-residue polypeptide: Acetyl-coenzyme A synthetase (650 aa).

CoA is bound by residues 191–194 (RGGR), threonine 311, and asparagine 335. Residues 387-389 (GEP), 411-416 (DTWWQT), aspartate 500, and arginine 515 contribute to the ATP site. Residue serine 523 coordinates CoA. Arginine 526 is an ATP binding site. Positions 537, 539, and 542 each coordinate Mg(2+). Arginine 584 serves as a coordination point for CoA. An N6-acetyllysine modification is found at lysine 609.

The protein belongs to the ATP-dependent AMP-binding enzyme family. Requires Mg(2+) as cofactor. Post-translationally, acetylated. Deacetylation by the SIR2-homolog deacetylase activates the enzyme.

It carries out the reaction acetate + ATP + CoA = acetyl-CoA + AMP + diphosphate. Catalyzes the conversion of acetate into acetyl-CoA (AcCoA), an essential intermediate at the junction of anabolic and catabolic pathways. AcsA undergoes a two-step reaction. In the first half reaction, AcsA combines acetate with ATP to form acetyl-adenylate (AcAMP) intermediate. In the second half reaction, it can then transfer the acetyl group from AcAMP to the sulfhydryl group of CoA, forming the product AcCoA. This Shewanella sp. (strain MR-7) protein is Acetyl-coenzyme A synthetase.